Consider the following 421-residue polypeptide: Signal recognition particle receptor FtsY (421 aa).

Residues 1-10 show a composition bias toward basic residues; that stretch reads MFSFFRRKKK. A disordered region spans residues 1–31; that stretch reads MFSFFRRKKKQETPALEEAQIQETAAKAESE. GTP contacts are provided by residues 228–235, 309–313, and 373–376; these read GINGAGKT, DTAGR, and TKLD.

The protein belongs to the GTP-binding SRP family. FtsY subfamily. As to quaternary structure, part of the signal recognition particle protein translocation system, which is composed of SRP and FtsY. SRP is a ribonucleoprotein composed of Ffh and a 4.5S RNA molecule.

The protein localises to the cell inner membrane. The protein resides in the cytoplasm. The enzyme catalyses GTP + H2O = GDP + phosphate + H(+). Its function is as follows. Involved in targeting and insertion of nascent membrane proteins into the cytoplasmic membrane. Acts as a receptor for the complex formed by the signal recognition particle (SRP) and the ribosome-nascent chain (RNC). Interaction with SRP-RNC leads to the transfer of the RNC complex to the Sec translocase for insertion into the membrane, the hydrolysis of GTP by both Ffh and FtsY, and the dissociation of the SRP-FtsY complex into the individual components. The protein is Signal recognition particle receptor FtsY of Neisseria meningitidis serogroup A / serotype 4A (strain DSM 15465 / Z2491).